The sequence spans 94 residues: Mobilization protein C (94 aa).

Interacts with MobA and MobB to form the relaxosome.

Its function is as follows. This protein is essential to promote the specific transfer of the plasmid in the presence of conjugative plasmids. The chain is Mobilization protein C (mobC) from Escherichia coli.